The following is a 48-amino-acid chain: uncharacterized protein (48 aa).

The signal sequence occupies residues 1–21; the sequence is MLENNVFRLMILMGGVIALIA.

This is an uncharacterized protein from Bacillus anthracis.